We begin with the raw amino-acid sequence, 96 residues long: MQVLVRDNNVDQALKALKKKMQREGIFREMKLRGHYEKPSEKKAREKAEAVRRARKLARKKLQREGLLPSKPKPVFGADRGRGAAGGAGGAPRPAR.

The segment covering 37 to 52 has biased composition (basic and acidic residues); the sequence is EKPSEKKAREKAEAVR. Residues 37-96 are disordered; sequence EKPSEKKAREKAEAVRRARKLARKKLQREGLLPSKPKPVFGADRGRGAAGGAGGAPRPAR. Positions 53–62 are enriched in basic residues; it reads RARKLARKKL.

This sequence belongs to the bacterial ribosomal protein bS21 family.

The chain is Small ribosomal subunit protein bS21 from Afipia carboxidovorans (strain ATCC 49405 / DSM 1227 / KCTC 32145 / OM5) (Oligotropha carboxidovorans).